The chain runs to 579 residues: Cytochrome P450 monooxygenase prx9 (579 aa).

The chain crosses the membrane as a helical span at residues 6 to 25 (LPLGSFVGTTLLLFILYKLV). Residues Asn-194, Asn-292, and Asn-390 are each glycosylated (N-linked (GlcNAc...) asparagine). Residue Cys-512 coordinates heme.

It belongs to the cytochrome P450 family. Heme serves as cofactor.

Its subcellular location is the membrane. It participates in sesquiterpene biosynthesis. In terms of biological role, cytochrome P450 monooxygenase; part of the gene cluster that mediates the biosynthesis of PR-toxin, a bicyclic sesquiterpene belonging to the eremophilane class and acting as a mycotoxin. The first step of the pathway is catalyzed by the aristolochene synthase which performs the cyclization of trans,trans-farnesyl diphosphate (FPP) to the bicyclic sesquiterpene aristolochene. Following the formation of aristolochene, the non-oxygenated aristolochene is converted to the trioxygenated intermediate eremofortin B, via 7-epi-neopetasone. This conversion appears to involve three enzymes, a hydroxysterol oxidase-like enzyme, the quinone-oxidase prx3 that forms the quinone-type-structure in the bicyclic nucleus of aristolochene with the C8-oxo group and the C-3 hydroxyl group, and the P450 monooxygenase prx9 that introduces the epoxide at the double bond between carbons 1 and 2. No monoxy or dioxy-intermediates have been reported to be released to the broth, so these three early oxidative reactions may be coupled together. Eremofortin B is further oxidized by another P450 monooxygenase, that introduces a second epoxide between carbons 7 and 11 prior to acetylation to eremofortin A by the acetyltransferase prx11. The second epoxidation may be performed by a second P450 monooxygenase. After the acetylation step, eremofortin A is converted to eremofortin C and then to PR-toxin. First the conversion of eremofortin A to eremofortin C proceeds by oxidation of the side chain of the molecule at C-12 and is catalyzed by the short-chain oxidoreductase prx1. The cytochrome P450 monooxygenase prx8 also plays a role in this step. The primary alcohol formed at C-12 is finally oxidized by the short-chain alcohol dehydrogenase prx4 that forms PR-toxin. The sequence is that of Cytochrome P450 monooxygenase prx9 from Penicillium rubens (strain ATCC 28089 / DSM 1075 / NRRL 1951 / Wisconsin 54-1255) (Penicillium chrysogenum).